Here is a 440-residue protein sequence, read N- to C-terminus: Thymidine phosphorylase (440 aa).

It belongs to the thymidine/pyrimidine-nucleoside phosphorylase family. In terms of assembly, homodimer.

The enzyme catalyses thymidine + phosphate = 2-deoxy-alpha-D-ribose 1-phosphate + thymine. The protein operates within pyrimidine metabolism; dTMP biosynthesis via salvage pathway; dTMP from thymine: step 1/2. Its function is as follows. The enzymes which catalyze the reversible phosphorolysis of pyrimidine nucleosides are involved in the degradation of these compounds and in their utilization as carbon and energy sources, or in the rescue of pyrimidine bases for nucleotide synthesis. This chain is Thymidine phosphorylase, found in Yersinia pseudotuberculosis serotype O:1b (strain IP 31758).